We begin with the raw amino-acid sequence, 138 residues long: Nucleoside diphosphate kinase (138 aa).

6 residues coordinate ATP: Lys-10, Phe-58, Arg-86, Thr-92, Arg-103, and Asn-113. His-116 serves as the catalytic Pros-phosphohistidine intermediate.

Belongs to the NDK family. In terms of assembly, homotetramer. Mg(2+) is required as a cofactor.

It is found in the cytoplasm. It catalyses the reaction a 2'-deoxyribonucleoside 5'-diphosphate + ATP = a 2'-deoxyribonucleoside 5'-triphosphate + ADP. The enzyme catalyses a ribonucleoside 5'-diphosphate + ATP = a ribonucleoside 5'-triphosphate + ADP. Its function is as follows. Major role in the synthesis of nucleoside triphosphates other than ATP. The ATP gamma phosphate is transferred to the NDP beta phosphate via a ping-pong mechanism, using a phosphorylated active-site intermediate. This chain is Nucleoside diphosphate kinase, found in Haemophilus ducreyi (strain 35000HP / ATCC 700724).